Here is a 141-residue protein sequence, read N- to C-terminus: Large ribosomal subunit protein uL11 (141 aa).

It belongs to the universal ribosomal protein uL11 family. In terms of assembly, part of the ribosomal stalk of the 50S ribosomal subunit. Interacts with L10 and the large rRNA to form the base of the stalk. L10 forms an elongated spine to which L12 dimers bind in a sequential fashion forming a multimeric L10(L12)X complex. One or more lysine residues are methylated.

Its function is as follows. Forms part of the ribosomal stalk which helps the ribosome interact with GTP-bound translation factors. The protein is Large ribosomal subunit protein uL11 of Roseobacter denitrificans (strain ATCC 33942 / OCh 114) (Erythrobacter sp. (strain OCh 114)).